Reading from the N-terminus, the 195-residue chain is Probable GTP-binding protein EngB (195 aa).

Residues 24–195 (GLTEVALSGR…EIWNFIETYI (172 aa)) form the EngB-type G domain. GTP contacts are provided by residues 32–39 (GRSNVGKS), 59–63 (GKTQT), 77–80 (DVPG), 144–147 (TKED), and 176–178 (YSS). Mg(2+) contacts are provided by Ser-39 and Thr-61.

It belongs to the TRAFAC class TrmE-Era-EngA-EngB-Septin-like GTPase superfamily. EngB GTPase family. It depends on Mg(2+) as a cofactor.

In terms of biological role, necessary for normal cell division and for the maintenance of normal septation. The sequence is that of Probable GTP-binding protein EngB from Staphylococcus epidermidis (strain ATCC 35984 / DSM 28319 / BCRC 17069 / CCUG 31568 / BM 3577 / RP62A).